A 235-amino-acid polypeptide reads, in one-letter code: Mitochondrial inner membrane protease ATP23 homolog (235 aa).

Residue His114 participates in a divalent metal cation binding. The active site involves Glu115. His118 contacts a divalent metal cation.

The protein belongs to the peptidase M76 family.

The protein is Mitochondrial inner membrane protease ATP23 homolog (atp23) of Xenopus laevis (African clawed frog).